Consider the following 205-residue polypeptide: N-(5'-phosphoribosyl)anthranilate isomerase (205 aa).

Belongs to the TrpF family.

The catalysed reaction is N-(5-phospho-beta-D-ribosyl)anthranilate = 1-(2-carboxyphenylamino)-1-deoxy-D-ribulose 5-phosphate. It functions in the pathway amino-acid biosynthesis; L-tryptophan biosynthesis; L-tryptophan from chorismate: step 3/5. In Zygosaccharomyces bailii, this protein is N-(5'-phosphoribosyl)anthranilate isomerase (TRP1).